Here is a 361-residue protein sequence, read N- to C-terminus: Peptide chain release factor 1 (361 aa).

N5-methylglutamine is present on glutamine 236.

The protein belongs to the prokaryotic/mitochondrial release factor family. In terms of processing, methylated by PrmC. Methylation increases the termination efficiency of RF1.

Its subcellular location is the cytoplasm. In terms of biological role, peptide chain release factor 1 directs the termination of translation in response to the peptide chain termination codons UAG and UAA. The protein is Peptide chain release factor 1 of Levilactobacillus brevis (strain ATCC 367 / BCRC 12310 / CIP 105137 / JCM 1170 / LMG 11437 / NCIMB 947 / NCTC 947) (Lactobacillus brevis).